Consider the following 61-residue polypeptide: Metallothionein-1F (61 aa).

M1 is subject to N-acetylmethionine. Positions 1–29 (MDPNCSCAAGVSCTCAGSCKCKECKCTSC) are beta. Residues C5, C7, C13, C15, C19, C21, C24, C26, C29, C33, C34, C36, C37, C41, C44, C48, C50, and C57 each contribute to the a divalent metal cation site. The segment at 30 to 61 (KKSCCSCCPVGCSKCAQGCVCKGASEKCSCCD) is alpha. The residue at position 58 (S58) is a Phosphoserine. A divalent metal cation contacts are provided by C59 and C60.

It belongs to the metallothionein superfamily. Type 1 family. As to quaternary structure, monomer.

Functionally, metallothioneins have a high content of cysteine residues that bind various heavy metals; these proteins are transcriptionally regulated by both heavy metals and glucocorticoids. This Homo sapiens (Human) protein is Metallothionein-1F (MT1F).